The chain runs to 106 residues: ATP-dependent Clp protease adapter protein ClpS (106 aa).

Belongs to the ClpS family. In terms of assembly, binds to the N-terminal domain of the chaperone ClpA.

Functionally, involved in the modulation of the specificity of the ClpAP-mediated ATP-dependent protein degradation. This Salmonella agona (strain SL483) protein is ATP-dependent Clp protease adapter protein ClpS.